The following is a 215-amino-acid chain: uncharacterized protein (215 aa).

The N-terminal stretch at 1–29 (MDKVQSGFLILFLFLMECQLHLCLPYADG) is a signal peptide. Topologically, residues 30–100 (LHPTGNITGL…IIRHRPALVK (71 aa)) are extracellular. The chain crosses the membrane as a helical span at residues 101–121 (VILISSVAFSIALICGMAISY). Residues 122 to 215 (MIYRLAQAEE…ASHNGKMEDL (94 aa)) lie on the Cytoplasmic side of the membrane. The tract at residues 191–215 (LKEEQNSVTENKTKNASHNGKMEDL) is disordered. Over residues 196–208 (NSVTENKTKNASH) the composition is skewed to polar residues.

Its subcellular location is the membrane. This is an uncharacterized protein from Homo sapiens (Human).